We begin with the raw amino-acid sequence, 345 residues long: Tropomodulin-4 (345 aa).

The disordered stretch occupies residues 42–63 (NMLLPAGLRQRDQTKKSPTGPL).

The protein belongs to the tropomodulin family. As to quaternary structure, binds to the N-terminus of tropomyosin and to actin. In terms of tissue distribution, highly expressed in skeletal muscle.

Its subcellular location is the cytoplasm. It is found in the cytoskeleton. Its function is as follows. Blocks the elongation and depolymerization of the actin filaments at the pointed end. The Tmod/TM complex contributes to the formation of the short actin protofilament, which in turn defines the geometry of the membrane skeleton. In Homo sapiens (Human), this protein is Tropomodulin-4 (TMOD4).